We begin with the raw amino-acid sequence, 176 residues long: 2-C-methyl-D-erythritol 2,4-cyclodiphosphate synthase (176 aa).

Positions 23, 25, and 60 each coordinate a divalent metal cation. 23-25 (DSH) provides a ligand contact to 4-CDP-2-C-methyl-D-erythritol 2-phosphate. 149-152 (TSGE) is a binding site for 4-CDP-2-C-methyl-D-erythritol 2-phosphate.

It belongs to the IspF family. In terms of assembly, homotrimer. Requires a divalent metal cation as cofactor.

The enzyme catalyses 4-CDP-2-C-methyl-D-erythritol 2-phosphate = 2-C-methyl-D-erythritol 2,4-cyclic diphosphate + CMP. It participates in isoprenoid biosynthesis; isopentenyl diphosphate biosynthesis via DXP pathway; isopentenyl diphosphate from 1-deoxy-D-xylulose 5-phosphate: step 4/6. Its function is as follows. Involved in the biosynthesis of isopentenyl diphosphate (IPP) and dimethylallyl diphosphate (DMAPP), two major building blocks of isoprenoid compounds. Catalyzes the conversion of 4-diphosphocytidyl-2-C-methyl-D-erythritol 2-phosphate (CDP-ME2P) to 2-C-methyl-D-erythritol 2,4-cyclodiphosphate (ME-CPP) with a corresponding release of cytidine 5-monophosphate (CMP). The polypeptide is 2-C-methyl-D-erythritol 2,4-cyclodiphosphate synthase (Chlamydia felis (strain Fe/C-56) (Chlamydophila felis)).